The chain runs to 344 residues: Dihydroorotase (344 aa).

Zn(2+)-binding residues include H14 and H16. Substrate contacts are provided by residues 16-18 and N42; that span reads HLR. 3 residues coordinate Zn(2+): K100, H137, and H175. K100 is subject to N6-carboxylysine. Residue H137 participates in substrate binding. Residue L220 coordinates substrate. D248 contacts Zn(2+). D248 is a catalytic residue. Residues H252 and A264 each coordinate substrate.

This sequence belongs to the metallo-dependent hydrolases superfamily. DHOase family. Class II DHOase subfamily. As to quaternary structure, homodimer. Zn(2+) is required as a cofactor.

The catalysed reaction is (S)-dihydroorotate + H2O = N-carbamoyl-L-aspartate + H(+). It participates in pyrimidine metabolism; UMP biosynthesis via de novo pathway; (S)-dihydroorotate from bicarbonate: step 3/3. In terms of biological role, catalyzes the reversible cyclization of carbamoyl aspartate to dihydroorotate. This chain is Dihydroorotase, found in Cupriavidus taiwanensis (strain DSM 17343 / BCRC 17206 / CCUG 44338 / CIP 107171 / LMG 19424 / R1) (Ralstonia taiwanensis (strain LMG 19424)).